The primary structure comprises 323 residues: Caspase-1 (323 aa).

Positions 1 to 33 (MTDECVTRNYGVGIRSPNGSENRGSFIMADNTD) are excised as a propeptide. Active-site residues include H154 and C196. Positions 203 to 215 (GGITLEKGVTETD) are excised as a propeptide.

Belongs to the peptidase C14A family. As to quaternary structure, heterotetramer that consists of two anti-parallel arranged heterodimers, each one formed by a 22 kDa (p22) and a 13 kDa (p13) subunit.

In terms of biological role, involved in the activation cascade of caspases responsible for apoptosis execution. Proteolytically cleaves poly(ADP-ribose) polymerase (PARP). Loss of zygotic DCP-1 function causes larval lethality and melanotic tumors. This Drosophila melanogaster (Fruit fly) protein is Caspase-1 (Dcp-1).